The sequence spans 325 residues: Acetyl-coenzyme A carboxylase carboxyl transferase subunit alpha (325 aa).

The 255-residue stretch at 38–292 (RLEDRLAKLQ…DETLKQSLKT (255 aa)) folds into the CoA carboxyltransferase C-terminal domain.

The protein belongs to the AccA family. In terms of assembly, acetyl-CoA carboxylase is a heterohexamer composed of biotin carboxyl carrier protein (AccB), biotin carboxylase (AccC) and two subunits each of ACCase subunit alpha (AccA) and ACCase subunit beta (AccD).

The protein localises to the cytoplasm. It catalyses the reaction N(6)-carboxybiotinyl-L-lysyl-[protein] + acetyl-CoA = N(6)-biotinyl-L-lysyl-[protein] + malonyl-CoA. It functions in the pathway lipid metabolism; malonyl-CoA biosynthesis; malonyl-CoA from acetyl-CoA: step 1/1. With respect to regulation, inhibited by pyrrolidine dione antibiotics moiramide B (CPD1) and CPD2. Its function is as follows. Component of the acetyl coenzyme A carboxylase (ACC) complex. First, biotin carboxylase catalyzes the carboxylation of biotin on its carrier protein (BCCP) and then the CO(2) group is transferred by the carboxyltransferase to acetyl-CoA to form malonyl-CoA. The polypeptide is Acetyl-coenzyme A carboxylase carboxyl transferase subunit alpha (Bacillus subtilis (strain 168)).